A 317-amino-acid polypeptide reads, in one-letter code: Regulator of microtubule dynamics protein 1 (317 aa).

At Lys168 the chain carries N6-succinyllysine. TPR repeat units lie at residues 171 to 207 (AICI…NPKD) and 225 to 261 (PWYQ…DPNF).

It belongs to the RMDN family. In terms of assembly, interacts with microtubules.

It localises to the cytoplasm. It is found in the cytoskeleton. The protein localises to the spindle. Its subcellular location is the spindle pole. This Bos taurus (Bovine) protein is Regulator of microtubule dynamics protein 1 (RMDN1).